The sequence spans 512 residues: ATP synthase subunit alpha (512 aa).

169-176 (GDRQTGKT) contributes to the ATP binding site.

It belongs to the ATPase alpha/beta chains family. F-type ATPases have 2 components, CF(1) - the catalytic core - and CF(0) - the membrane proton channel. CF(1) has five subunits: alpha(3), beta(3), gamma(1), delta(1), epsilon(1). CF(0) has three main subunits: a(1), b(2) and c(9-12). The alpha and beta chains form an alternating ring which encloses part of the gamma chain. CF(1) is attached to CF(0) by a central stalk formed by the gamma and epsilon chains, while a peripheral stalk is formed by the delta and b chains.

It is found in the cell inner membrane. The enzyme catalyses ATP + H2O + 4 H(+)(in) = ADP + phosphate + 5 H(+)(out). Functionally, produces ATP from ADP in the presence of a proton gradient across the membrane. The alpha chain is a regulatory subunit. The chain is ATP synthase subunit alpha from Aromatoleum aromaticum (strain DSM 19018 / LMG 30748 / EbN1) (Azoarcus sp. (strain EbN1)).